Reading from the N-terminus, the 189-residue chain is Prostaglandin-H2 D-isomerase (189 aa).

The N-terminal stretch at Met1 to Ala24 is a signal peptide. Gln25 is modified (pyrrolidone carboxylic acid). N-linked (GlcNAc...) asparagine glycosylation occurs at Asn51. The Nucleophile role is filled by Cys65. A glycan (N-linked (GlcNAc...) asparagine) is linked at Asn78. Cys89 and Cys186 are joined by a disulfide.

The protein belongs to the calycin superfamily. Lipocalin family. As to quaternary structure, monomer. In terms of tissue distribution, abundant in the brain and CNS, where it is expressed in tissues of the blood-brain barrier and secreted into the cerebro-spinal fluid. In the male reproductive system, it is expressed in the testis, efferent ducts and epididymis, and is secreted into the seminal fluid. In the eye, it is expressed in the pigmented epithelium of the retina and the nonpigmented epithelium of the ciliary body, and secreted into the aqueous humor. Low levels detected in various tissue fluids such as serum, normal urine, ascitic fluid and tear fluid. Also found in a number of other organs including the ear, heart and lung.

The protein localises to the rough endoplasmic reticulum. It localises to the nucleus membrane. It is found in the golgi apparatus. Its subcellular location is the cytoplasm. The protein resides in the perinuclear region. The protein localises to the secreted. It catalyses the reaction prostaglandin H2 = prostaglandin D2. Functionally, catalyzes the conversion of PGH2 to PGD2, a prostaglandin involved in smooth muscle contraction/relaxation and a potent inhibitor of platelet aggregation. Involved in a variety of CNS functions, such as sedation, NREM sleep and PGE2-induced allodynia, and may have an anti-apoptotic role in oligodendrocytes. Binds small non-substrate lipophilic molecules, including biliverdin, bilirubin, retinal, retinoic acid and thyroid hormone, and may act as a scavenger for harmful hydrophobic molecules and as a secretory retinoid and thyroid hormone transporter. Possibly involved in development and maintenance of the blood-brain, blood-retina, blood-aqueous humor and blood-testis barrier. It is likely to play important roles in both maturation and maintenance of the central nervous system and male reproductive system. Involved in PLA2G3-dependent maturation of mast cells. PLA2G3 is secreted by immature mast cells and acts on nearby fibroblasts upstream to PTDGS to synthesize PGD2, which in turn promotes mast cell maturation and degranulation via PTGDR. The sequence is that of Prostaglandin-H2 D-isomerase (Ptgds) from Mus musculus (Mouse).